A 142-amino-acid chain; its full sequence is Small ribosomal subunit protein uS9 (142 aa).

Belongs to the universal ribosomal protein uS9 family. As to quaternary structure, component of the small ribosomal subunit (SSU). Mature N.crassa ribosomes consist of a small (40S) and a large (60S) subunit. The 40S small subunit contains 1 molecule of ribosomal RNA (18S rRNA) and at least 32 different proteins. The large 60S subunit contains 3 rRNA molecules (26S, 5.8S and 5S rRNA) and at least 42 different proteins.

It is found in the cytoplasm. Its function is as follows. Component of the ribosome, a large ribonucleoprotein complex responsible for the synthesis of proteins in the cell. The small ribosomal subunit (SSU) binds messenger RNAs (mRNAs) and translates the encoded message by selecting cognate aminoacyl-transfer RNA (tRNA) molecules. The large subunit (LSU) contains the ribosomal catalytic site termed the peptidyl transferase center (PTC), which catalyzes the formation of peptide bonds, thereby polymerizing the amino acids delivered by tRNAs into a polypeptide chain. The nascent polypeptides leave the ribosome through a tunnel in the LSU and interact with protein factors that function in enzymatic processing, targeting, and the membrane insertion of nascent chains at the exit of the ribosomal tunnel. This chain is Small ribosomal subunit protein uS9 (rps-16), found in Neurospora crassa (strain ATCC 24698 / 74-OR23-1A / CBS 708.71 / DSM 1257 / FGSC 987).